We begin with the raw amino-acid sequence, 387 residues long: Exodeoxyribonuclease 7 large subunit (387 aa).

It belongs to the XseA family. In terms of assembly, heterooligomer composed of large and small subunits.

It is found in the cytoplasm. It catalyses the reaction Exonucleolytic cleavage in either 5'- to 3'- or 3'- to 5'-direction to yield nucleoside 5'-phosphates.. Its function is as follows. Bidirectionally degrades single-stranded DNA into large acid-insoluble oligonucleotides, which are then degraded further into small acid-soluble oligonucleotides. The polypeptide is Exodeoxyribonuclease 7 large subunit (Campylobacter jejuni subsp. jejuni serotype O:23/36 (strain 81-176)).